Reading from the N-terminus, the 327-residue chain is Ribonucleoside-diphosphate reductase small chain (327 aa).

Asp-70, Glu-101, and His-104 together coordinate Fe cation. Tyr-108 is an active-site residue. 3 residues coordinate Fe cation: Glu-164, Glu-198, and His-201.

It belongs to the ribonucleoside diphosphate reductase small chain family. As to quaternary structure, heterotetramer composed of a homodimer of the large subunit (R1) and a homodimer of the small subunit (R2). Larger multisubunit protein complex are also active, composed of (R1)n(R2)n. The cofactor is Fe cation.

It catalyses the reaction a 2'-deoxyribonucleoside 5'-diphosphate + [thioredoxin]-disulfide + H2O = a ribonucleoside 5'-diphosphate + [thioredoxin]-dithiol. In terms of biological role, ribonucleoside-diphosphate reductase holoenzyme provides the precursors necessary for viral DNA synthesis. Allows virus growth in non-dividing cells. Catalyzes the biosynthesis of deoxyribonucleotides from the corresponding ribonucleotides. The sequence is that of Ribonucleoside-diphosphate reductase small chain from African swine fever virus (isolate Tick/Malawi/Lil 20-1/1983) (ASFV).